The sequence spans 1224 residues: MKIWRFFLMKERTRLPFDNLPFYNKVMDKTAIKKLISRLIDHFGMTYTSHILDQLKTSGFQQATDTAISLGIDDLLTAPSKGWLVQDAEQQGSVSEKQNHYGNVHAVEKLRQSIEIWYATSEYLRKEMNPNFSMTDPLNPVHVMSFSGARGSTSQVHQLVGMRGLMSDPQGQIIDLPIRRNLREGLSLTEYIISCYGARKGVVDTAVRTADAGYLTRRLVEVVQHIVVRRTDCGTIQGIFVSPIRGRERDRNEIVVRTQILIGRVLADDVYINRRCIATRNQDIGVGLANQLINLRTQPIYIRTPFTCKSISRICQLCYGRSTTHSHLIELGEAVGIIAGQSIGEPGTQLTLRTFHTGGVFTGDIAEHIRAPFNGKIEFNENLVYPTRTRNGHPAYLCHNNLSITIDGQDQVQNLTIPPQSLLLVQNDQYVESEQLIAEVRARTSSFKEKVRKNIYSDLEGEMHWSTNVCHAPEYVQGNVHPILRTGYLWILSGGIYGSRVVPFPFHKYQDQVYVQPFVAKHQSLSDSYVDQVEHRSGDSNCYEKEEQIFSYSETETDRTISNKHRDSIYVFYPNNYNIKGKKQMNRFIVSLQCDKEWEKKIIPCPDAILRIPKSGILQRNSIFGYSNVEHGIPDGSNMTTPFSLDLSREGDNLQIQISYSISYEDGERIQVMSDISIPLVRTCIGFDWEQIDSIESEAYVSLISVRTNKIVNNMVQISLMKYPPFFMGRRDNKTSPNLMFHNNLDHTNLLSSNGASQLISKHQGIICSLSNGEEDSGSFMVLSPSDYFRIVLFNDSKCYDTGNQSNRKDPMRKIIEFSGLLGNLHSITNRFPSSHFLTYKKVLSKKHSIFHNSFNTFQVPKYYFMDENMIIYHFDPCRNIISNLLGPNWCSSSSESEFCEKTFPVVSLGQLIPESVWISEDEPLPESGQIIAVDEESLVIRSAKPYLATRKATVHSHYGKILDKGDTLITLIYERFKSSDIIQGLPKVEQLSEARLNNSISMNLKESFENWTGDMTRFLGSLWGLFISARITMEQSQIHLVNQIQKVYRSQGVRIGDKHIEVIVRQMTSKVLISEDGTANVFSPGELIVLSRAQRMDRALEEAIYYQTMLLGITRASLNTQSFISEASFQETARVLAKAALQGRIDWLKGLKENVILGGMIPAGTGQHIHRSGKRNGIDPRIGNRNLFSNKVKDILFHHDKVDFFSFQDNSYKYHNILKQQLK.

Cysteine 233, cysteine 308, cysteine 315, and cysteine 318 together coordinate Zn(2+).

It belongs to the RNA polymerase beta' chain family. RpoC2 subfamily. As to quaternary structure, in plastids the minimal PEP RNA polymerase catalytic core is composed of four subunits: alpha, beta, beta', and beta''. When a (nuclear-encoded) sigma factor is associated with the core the holoenzyme is formed, which can initiate transcription. The cofactor is Zn(2+).

It localises to the plastid. It is found in the chloroplast. The enzyme catalyses RNA(n) + a ribonucleoside 5'-triphosphate = RNA(n+1) + diphosphate. In terms of biological role, DNA-dependent RNA polymerase catalyzes the transcription of DNA into RNA using the four ribonucleoside triphosphates as substrates. The sequence is that of DNA-directed RNA polymerase subunit beta'' from Pinus thunbergii (Japanese black pine).